Here is a 23-residue protein sequence, read N- to C-terminus: GLIQTIKEKLKELAGGLVTGIQS.

Belongs to the frog skin active peptide (FSAP) family. Aurein subfamily. In terms of tissue distribution, expressed by the skin dorsal glands.

Its subcellular location is the secreted. Its function is as follows. Has no antimicrobial or anticancer activity. The sequence is that of Aurein-4.1 from Ranoidea aurea (Green and golden bell frog).